Consider the following 146-residue polypeptide: MGRFIFLSFGLLVVFLSLSGTGADCPSGWSSYEGHCYKPFNEQKNWADAENFCTQQHTGGHLVSFHSTEEADFVVKLAFQNFGHGIFWMGLSNVWNQCSWQWSSAAKLKYEAWAEESYCVYFKSTNNKWRSRACRMEAYFVCEFQA.

Residues 1–23 form the signal peptide; it reads MGRFIFLSFGLLVVFLSLSGTGA. Intrachain disulfides connect Cys-25-Cys-36, Cys-53-Cys-142, and Cys-119-Cys-134. The 112-residue stretch at 32–143 folds into the C-type lectin domain; it reads YEGHCYKPFN…CRMEAYFVCE (112 aa). 2 residues coordinate Ca(2+): Ser-64 and Glu-70. Glu-143 provides a ligand contact to Ca(2+).

This sequence belongs to the snaclec family. As to quaternary structure, heterodimer with subunit A of IX/X-bp or IX-bp; disulfide-linked. In terms of tissue distribution, expressed by the venom gland.

Its subcellular location is the secreted. Its function is as follows. When linked to subunit A of IX/X-bp, anticoagulant protein which binds to the gamma-carboxyglutamic acid-domain regions of factors IX (F9) and factor X (F10) in the presence of calcium with a 1 to 1 stoichiometry. Functionally, when linked to subunit A of IX-bp, anticoagulant protein which binds to the gamma-carboxyglutamic acid-domain regions of factor IX (but not to factor X) in the presence of calcium with a 1 to 1 stoichiometry. This Gloydius halys (Chinese water mocassin) protein is Snaclec coagulation factor IX/factor X-binding protein subunit B.